Reading from the N-terminus, the 171-residue chain is MPLLDSFTVDHTRMAAPAVRVAKTMKTPHGDTITVFDLRFCRPNLEVMPERGIHTLEHLFAGFMRDHLNGQGVEIIDISPMGCRTGFYMSLIGVPEEQRVADAWKAAMSDVLKVTDQRKIPELNEFQCGTYHMHSLEEAQEIAKHILDHDVVVNHNEELALPKEKLQELHI.

Fe cation-binding residues include histidine 54, histidine 58, and cysteine 128.

The protein belongs to the LuxS family. In terms of assembly, homodimer. Fe cation serves as cofactor.

The catalysed reaction is S-(5-deoxy-D-ribos-5-yl)-L-homocysteine = (S)-4,5-dihydroxypentane-2,3-dione + L-homocysteine. Involved in the synthesis of autoinducer 2 (AI-2) which is secreted by bacteria and is used to communicate both the cell density and the metabolic potential of the environment. The regulation of gene expression in response to changes in cell density is called quorum sensing. Catalyzes the transformation of S-ribosylhomocysteine (RHC) to homocysteine (HC) and 4,5-dihydroxy-2,3-pentadione (DPD). The sequence is that of S-ribosylhomocysteine lyase from Serratia proteamaculans (strain 568).